Here is a 114-residue protein sequence, read N- to C-terminus: Vacuolar ATPase assembly integral membrane protein VMA21 (114 aa).

Over 1–39 the chain is Cytoplasmic; the sequence is MATRRIISQEKTLLEKDDSIGSSPAADEKSNIAPAVPTS. Residues 40–60 traverse the membrane as a helical segment; it reads VIMKLLAFTLGMIVIPIGSYF. Residues 61-73 are Lumenal-facing; that stretch reads ATVDSVFNGNSTY. Residues 74–94 traverse the membrane as a helical segment; sequence AGALAAIMANVVLIGYIFVAM. Residues 95-114 lie on the Cytoplasmic side of the membrane; the sequence is AEDQSDQQEGGGPGDGKKDR. The Prevents secretion from ER signature appears at 111–114; it reads KKDR.

This sequence belongs to the VMA21 family.

Its subcellular location is the endoplasmic reticulum membrane. The protein localises to the endoplasmic reticulum-Golgi intermediate compartment membrane. It localises to the cytoplasmic vesicle. It is found in the COPII-coated vesicle membrane. Functionally, required for the assembly of the V0 complex of the vacuolar ATPase (V-ATPase) in the endoplasmic reticulum. The chain is Vacuolar ATPase assembly integral membrane protein VMA21 from Chaetomium globosum (strain ATCC 6205 / CBS 148.51 / DSM 1962 / NBRC 6347 / NRRL 1970) (Soil fungus).